The primary structure comprises 404 residues: Cysteine desulfurase IscS (404 aa).

Pyridoxal 5'-phosphate-binding positions include 75–76, Asn155, Gln183, and 203–205; these read AT and SAH. Position 206 is an N6-(pyridoxal phosphate)lysine (Lys206). Thr243 is a binding site for pyridoxal 5'-phosphate. The active-site Cysteine persulfide intermediate is the Cys328. [2Fe-2S] cluster is bound at residue Cys328.

It belongs to the class-V pyridoxal-phosphate-dependent aminotransferase family. NifS/IscS subfamily. As to quaternary structure, homodimer. Forms a heterotetramer with IscU, interacts with other sulfur acceptors. Pyridoxal 5'-phosphate serves as cofactor.

The protein localises to the cytoplasm. The enzyme catalyses (sulfur carrier)-H + L-cysteine = (sulfur carrier)-SH + L-alanine. Its pathway is cofactor biosynthesis; iron-sulfur cluster biosynthesis. Master enzyme that delivers sulfur to a number of partners involved in Fe-S cluster assembly, tRNA modification or cofactor biosynthesis. Catalyzes the removal of elemental sulfur atoms from cysteine to produce alanine. Functions as a sulfur delivery protein for Fe-S cluster synthesis onto IscU, an Fe-S scaffold assembly protein, as well as other S acceptor proteins. The chain is Cysteine desulfurase IscS from Buchnera aphidicola subsp. Acyrthosiphon pisum (strain 5A).